The chain runs to 404 residues: Phosphopentomutase (404 aa).

Residues Asp10, Asp303, His308, Asp344, His345, and His356 each coordinate Mn(2+).

This sequence belongs to the phosphopentomutase family. Mn(2+) is required as a cofactor.

Its subcellular location is the cytoplasm. The catalysed reaction is 2-deoxy-alpha-D-ribose 1-phosphate = 2-deoxy-D-ribose 5-phosphate. It carries out the reaction alpha-D-ribose 1-phosphate = D-ribose 5-phosphate. It participates in carbohydrate degradation; 2-deoxy-D-ribose 1-phosphate degradation; D-glyceraldehyde 3-phosphate and acetaldehyde from 2-deoxy-alpha-D-ribose 1-phosphate: step 1/2. In terms of biological role, isomerase that catalyzes the conversion of deoxy-ribose 1-phosphate (dRib-1-P) and ribose 1-phosphate (Rib-1-P) to deoxy-ribose 5-phosphate (dRib-5-P) and ribose 5-phosphate (Rib-5-P), respectively. In Shewanella oneidensis (strain ATCC 700550 / JCM 31522 / CIP 106686 / LMG 19005 / NCIMB 14063 / MR-1), this protein is Phosphopentomutase.